A 154-amino-acid polypeptide reads, in one-letter code: Urease accessory protein UreE (154 aa).

This sequence belongs to the UreE family.

Its subcellular location is the cytoplasm. Involved in urease metallocenter assembly. Binds nickel. Probably functions as a nickel donor during metallocenter assembly. The protein is Urease accessory protein UreE of Prochlorococcus marinus subsp. pastoris (strain CCMP1986 / NIES-2087 / MED4).